Reading from the N-terminus, the 325-residue chain is Elongation factor P--(R)-beta-lysine ligase (325 aa).

76-78 lines the substrate pocket; it reads SPE. ATP contacts are provided by residues 100–102 and N109; that span reads RNE. Position 118 (Y118) interacts with substrate. 244 to 245 serves as a coordination point for ATP; sequence EL. Residue E251 coordinates substrate. ATP is bound at residue G300.

This sequence belongs to the class-II aminoacyl-tRNA synthetase family. EpmA subfamily. In terms of assembly, homodimer.

It carries out the reaction D-beta-lysine + L-lysyl-[protein] + ATP = N(6)-((3R)-3,6-diaminohexanoyl)-L-lysyl-[protein] + AMP + diphosphate + H(+). Its function is as follows. With EpmB is involved in the beta-lysylation step of the post-translational modification of translation elongation factor P (EF-P). Catalyzes the ATP-dependent activation of (R)-beta-lysine produced by EpmB, forming a lysyl-adenylate, from which the beta-lysyl moiety is then transferred to the epsilon-amino group of a conserved specific lysine residue in EF-P. The polypeptide is Elongation factor P--(R)-beta-lysine ligase (Citrobacter koseri (strain ATCC BAA-895 / CDC 4225-83 / SGSC4696)).